We begin with the raw amino-acid sequence, 177 residues long: uncharacterized protein (177 aa).

The protein to M.jannaschii MJ0628.

This is an uncharacterized protein from Methanocaldococcus jannaschii (strain ATCC 43067 / DSM 2661 / JAL-1 / JCM 10045 / NBRC 100440) (Methanococcus jannaschii).